A 497-amino-acid chain; its full sequence is tRNA (adenine(58)-N(1))-methyltransferase non-catalytic subunit TRM6 (497 aa).

Residues T69–K102 are disordered. Basic and acidic residues predominate over residues K79–K102. Positions N94–Q104 are substrate. T107 carries the phosphothreonine modification. 2 substrate regions span residues K145–Y154 and R175–H182. Residues S276–K354 form a disordered region. 2 positions are modified to phosphoserine: S298 and S305. A compositionally biased stretch (basic and acidic residues) spans E311 to K354. 2 residues coordinate substrate: R349 and R377. Substrate stretches follow at residues R415 to L423 and Q434 to H441. The segment at P468 to S497 is disordered. The segment covering E478–S497 has biased composition (basic and acidic residues).

This sequence belongs to the TRM6/GCD10 family. In terms of assembly, heterotetramer; composed of two copies of TRMT6 and two copies of TRMT61A.

It localises to the nucleus. In terms of biological role, substrate-binding subunit of tRNA (adenine-N(1)-)-methyltransferase, which catalyzes the formation of N(1)-methyladenine at position 58 (m1A58) in initiator methionyl-tRNA. Together with the TRMT61A catalytic subunit, part of a mRNA N(1)-methyltransferase complex that mediates methylation of adenosine residues at the N(1) position of a small subset of mRNAs: N(1) methylation takes place in tRNA T-loop-like structures of mRNAs and is only present at low stoichiometries. This Bos taurus (Bovine) protein is tRNA (adenine(58)-N(1))-methyltransferase non-catalytic subunit TRM6 (TRMT6).